The sequence spans 147 residues: Globin, polymeric component P2 (147 aa).

The Globin domain maps to 2 to 146 (PLTADQVAAL…ISDALVAGLE (145 aa)). Residue histidine 96 coordinates heme b.

Belongs to the globin family. In terms of assembly, polymer.

The chain is Globin, polymeric component P2 from Glycera dibranchiata (Bloodworm).